Consider the following 125-residue polypeptide: Succinate dehydrogenase assembly factor 3, mitochondrial (125 aa).

The N-terminal 30 residues, 1-30, are a transit peptide targeting the mitochondrion; it reads MTGRHVSRVRSLYRRILQLHRALPPDLKAL.

Belongs to the complex I LYR family. SDHAF3 subfamily. In terms of assembly, interacts with Sdhb within an Sdha-Sdhb subcomplex.

It is found in the mitochondrion matrix. Plays an essential role in the assembly of succinate dehydrogenase (SDH), an enzyme complex (also referred to as respiratory complex II) that is a component of both the tricarboxylic acid (TCA) cycle and the mitochondrial electron transport chain, and which couples the oxidation of succinate to fumarate with the reduction of ubiquinone (coenzyme Q) to ubiquinol. Promotes maturation of the iron-sulfur protein subunit Sdhb of the SDH catalytic dimer, protecting it from the deleterious effects of oxidants. May act together with SDHAF1. This Rattus norvegicus (Rat) protein is Succinate dehydrogenase assembly factor 3, mitochondrial.